The following is a 484-amino-acid chain: Ribosomal RNA small subunit methyltransferase F (484 aa).

S-adenosyl-L-methionine contacts are provided by residues 119–125 (ASAPGSK), Glu-143, Asp-170, and Asp-188. The active-site Nucleophile is Cys-241.

It belongs to the class I-like SAM-binding methyltransferase superfamily. RsmB/NOP family.

Its subcellular location is the cytoplasm. The catalysed reaction is cytidine(1407) in 16S rRNA + S-adenosyl-L-methionine = 5-methylcytidine(1407) in 16S rRNA + S-adenosyl-L-homocysteine + H(+). Specifically methylates the cytosine at position 1407 (m5C1407) of 16S rRNA. The chain is Ribosomal RNA small subunit methyltransferase F from Shewanella frigidimarina (strain NCIMB 400).